The sequence spans 429 residues: Glutamyl-tRNA reductase (429 aa).

Substrate-binding positions include 50 to 53 (TCNR), serine 116, 121 to 123 (EPQ), and glutamine 127. Cysteine 51 acts as the Nucleophile in catalysis. Residue 196 to 201 (GAGEMA) participates in NADP(+) binding.

It belongs to the glutamyl-tRNA reductase family. In terms of assembly, homodimer.

It catalyses the reaction (S)-4-amino-5-oxopentanoate + tRNA(Glu) + NADP(+) = L-glutamyl-tRNA(Glu) + NADPH + H(+). It participates in porphyrin-containing compound metabolism; protoporphyrin-IX biosynthesis; 5-aminolevulinate from L-glutamyl-tRNA(Glu): step 1/2. Its function is as follows. Catalyzes the NADPH-dependent reduction of glutamyl-tRNA(Glu) to glutamate 1-semialdehyde (GSA). This Thermodesulfovibrio yellowstonii (strain ATCC 51303 / DSM 11347 / YP87) protein is Glutamyl-tRNA reductase.